We begin with the raw amino-acid sequence, 307 residues long: Protein EI24 homolog (307 aa).

A run of 2 helical transmembrane segments spans residues Phe53–Tyr73 and Met92–Ala112. A glycan (N-linked (GlcNAc...) asparagine) is linked at Asn135. A run of 4 helical transmembrane segments spans residues Leu153–Ile173, Phe175–Gly195, Phe225–Ile245, and Gly260–Leu280.

This sequence belongs to the EI24 family.

The protein localises to the membrane. The polypeptide is Protein EI24 homolog (Dictyostelium discoideum (Social amoeba)).